The following is a 256-amino-acid chain: Thiazole synthase (256 aa).

The active-site Schiff-base intermediate with DXP is Lys96. 1-deoxy-D-xylulose 5-phosphate contacts are provided by residues Gly157, 183-184 (AG), and 205-206 (NT).

This sequence belongs to the ThiG family. As to quaternary structure, homotetramer. Forms heterodimers with either ThiH or ThiS.

It localises to the cytoplasm. It catalyses the reaction [ThiS sulfur-carrier protein]-C-terminal-Gly-aminoethanethioate + 2-iminoacetate + 1-deoxy-D-xylulose 5-phosphate = [ThiS sulfur-carrier protein]-C-terminal Gly-Gly + 2-[(2R,5Z)-2-carboxy-4-methylthiazol-5(2H)-ylidene]ethyl phosphate + 2 H2O + H(+). It participates in cofactor biosynthesis; thiamine diphosphate biosynthesis. Its function is as follows. Catalyzes the rearrangement of 1-deoxy-D-xylulose 5-phosphate (DXP) to produce the thiazole phosphate moiety of thiamine. Sulfur is provided by the thiocarboxylate moiety of the carrier protein ThiS. In vitro, sulfur can be provided by H(2)S. This is Thiazole synthase from Bacillus cytotoxicus (strain DSM 22905 / CIP 110041 / 391-98 / NVH 391-98).